Reading from the N-terminus, the 144-residue chain is Large ribosomal subunit protein uL16 (144 aa).

The segment covering 1 to 17 (MLQPKKTKFRRQQKGRA) has biased composition (basic residues). The disordered stretch occupies residues 1-22 (MLQPKKTKFRRQQKGRAKGNAQ).

The protein belongs to the universal ribosomal protein uL16 family. Part of the 50S ribosomal subunit.

Its function is as follows. Binds 23S rRNA and is also seen to make contacts with the A and possibly P site tRNAs. This Bacteroides fragilis (strain ATCC 25285 / DSM 2151 / CCUG 4856 / JCM 11019 / LMG 10263 / NCTC 9343 / Onslow / VPI 2553 / EN-2) protein is Large ribosomal subunit protein uL16.